The chain runs to 149 residues: General odorant-binding protein 57c (149 aa).

Positions 1–16 (MLKLWLICILTVSVVS) are cleaved as a signal peptide. Disulfide bonds link C32/C70, C66/C117, and C106/C126.

This sequence belongs to the PBP/GOBP family.

Its function is as follows. Present in the aqueous fluid surrounding olfactory sensory dendrites and are thought to aid in the capture and transport of hydrophobic odorants into and through this fluid. The chain is General odorant-binding protein 57c from Drosophila melanogaster (Fruit fly).